Here is a 263-residue protein sequence, read N- to C-terminus: Chromosomal replication initiator protein DnaA (263 aa).

A region of interest (domain I, interacts with DnaA modulators) is located at residue Asp1. Position 1 (Asp1) is a region of interest, domain II. The tract at residues 1 to 177 is domain III, AAA+ region; the sequence is DSGLGKTHLL…GIINKIEFSI (177 aa). Residues Gly3, Gly5, Lys6, and Thr7 each coordinate ATP. The interval 178–263 is domain IV, binds dsDNA; that stretch reads IQDNSAAPKI…KNYSEIGVAF (86 aa).

This sequence belongs to the DnaA family. In terms of assembly, oligomerizes as a right-handed, spiral filament on DNA at oriC.

The protein resides in the cytoplasm. Its function is as follows. Plays an essential role in the initiation and regulation of chromosomal replication. ATP-DnaA binds to the origin of replication (oriC) to initiate formation of the DNA replication initiation complex once per cell cycle. Binds the DnaA box (a 9 base pair repeat at the origin) and separates the double-stranded (ds)DNA. Forms a right-handed helical filament on oriC DNA; dsDNA binds to the exterior of the filament while single-stranded (ss)DNA is stabiized in the filament's interior. The ATP-DnaA-oriC complex binds and stabilizes one strand of the AT-rich DNA unwinding element (DUE), permitting loading of DNA polymerase. After initiation quickly degrades to an ADP-DnaA complex that is not apt for DNA replication. Binds acidic phospholipids. This Spiroplasma apis protein is Chromosomal replication initiator protein DnaA.